A 214-amino-acid polypeptide reads, in one-letter code: Charged multivesicular body protein 2b (214 aa).

Positions 16–55 (EQNKELRGTQRAITRDRAALEKQEKQLEMEIKKMAKAGNK) form a coiled coil. The disordered stretch occupies residues 178 to 203 (MAKAPSAAKGLPSTSASKSSGISDEE). A compositionally biased stretch (polar residues) spans 189–199 (PSTSASKSSGI). The MIT-interacting motif signature appears at 202–212 (EEIERQLKALG).

This sequence belongs to the SNF7 family. As to quaternary structure, probable core component of the endosomal sorting required for transport complex III (ESCRT-III). ESCRT-III components are thought to multimerize to form a flat lattice on the perimeter membrane of the endosome.

The protein resides in the cytoplasm. Its subcellular location is the cytosol. It is found in the late endosome membrane. In terms of biological role, probable core component of the endosomal sorting required for transport complex III (ESCRT-III) which is involved in multivesicular bodies (MVBs) formation and sorting of endosomal cargo proteins into MVBs. MVBs contain intraluminal vesicles (ILVs) that are generated by invagination and scission from the limiting membrane of the endosome and mostly are delivered to lysosomes enabling degradation of membrane proteins, such as stimulated growth factor receptors, lysosomal enzymes and lipids. The sequence is that of Charged multivesicular body protein 2b (chmp2b) from Xenopus tropicalis (Western clawed frog).